The primary structure comprises 214 residues: Hypoxanthine-guanine phosphoribosyltransferase (214 aa).

At Ala-2 the chain carries N-acetylalanine. GMP is bound at residue Lys-69. At Lys-103 the chain carries N6-acetyllysine. Lys-115 participates in a covalent cross-link: Glycyl lysine isopeptide (Lys-Gly) (interchain with G-Cter in SUMO1); alternate. Lys-115 participates in a covalent cross-link: Glycyl lysine isopeptide (Lys-Gly) (interchain with G-Cter in SUMO2); alternate. Residues 134 to 142 (EDIIDTGKT), Lys-166, 186 to 188 (KFV), and Asp-194 contribute to the GMP site. Residue Asp-138 is the Proton acceptor of the active site. Thr-142 carries the phosphothreonine modification. A Mg(2+)-binding site is contributed by Asp-194.

It belongs to the purine/pyrimidine phosphoribosyltransferase family. Homotetramer. Requires Mg(2+) as cofactor.

Its subcellular location is the cytoplasm. The enzyme catalyses IMP + diphosphate = hypoxanthine + 5-phospho-alpha-D-ribose 1-diphosphate. It catalyses the reaction GMP + diphosphate = guanine + 5-phospho-alpha-D-ribose 1-diphosphate. Its pathway is purine metabolism; IMP biosynthesis via salvage pathway; IMP from hypoxanthine: step 1/1. Functionally, converts guanine to guanosine monophosphate, and hypoxanthine to inosine monophosphate. Transfers the 5-phosphoribosyl group from 5-phosphoribosylpyrophosphate onto the purine. Plays a central role in the generation of purine nucleotides through the purine salvage pathway. The chain is Hypoxanthine-guanine phosphoribosyltransferase (Hprt1) from Mus spretus (Western Mediterranean mouse).